A 275-amino-acid chain; its full sequence is Dermonecrotic toxin LhSicTox-alphaVI1i (275 aa).

Histidine 5 is a catalytic residue. The Mg(2+) site is built by glutamate 25 and aspartate 27. Histidine 41 serves as the catalytic Nucleophile. Intrachain disulfides connect cysteine 45–cysteine 51 and cysteine 47–cysteine 192. Aspartate 85 lines the Mg(2+) pocket.

Belongs to the arthropod phospholipase D family. Class II subfamily. Mg(2+) is required as a cofactor. As to expression, expressed by the venom gland.

Its subcellular location is the secreted. The enzyme catalyses an N-(acyl)-sphingosylphosphocholine = an N-(acyl)-sphingosyl-1,3-cyclic phosphate + choline. It catalyses the reaction an N-(acyl)-sphingosylphosphoethanolamine = an N-(acyl)-sphingosyl-1,3-cyclic phosphate + ethanolamine. The catalysed reaction is a 1-acyl-sn-glycero-3-phosphocholine = a 1-acyl-sn-glycero-2,3-cyclic phosphate + choline. It carries out the reaction a 1-acyl-sn-glycero-3-phosphoethanolamine = a 1-acyl-sn-glycero-2,3-cyclic phosphate + ethanolamine. Functionally, dermonecrotic toxins cleave the phosphodiester linkage between the phosphate and headgroup of certain phospholipids (sphingolipid and lysolipid substrates), forming an alcohol (often choline) and a cyclic phosphate. This toxin acts on sphingomyelin (SM). It may also act on ceramide phosphoethanolamine (CPE), lysophosphatidylcholine (LPC) and lysophosphatidylethanolamine (LPE), but not on lysophosphatidylserine (LPS), and lysophosphatidylglycerol (LPG). It acts by transphosphatidylation, releasing exclusively cyclic phosphate products as second products. Induces dermonecrosis, hemolysis, increased vascular permeability, edema, inflammatory response, and platelet aggregation. This is Dermonecrotic toxin LhSicTox-alphaVI1i from Loxosceles hirsuta (Recluse spider).